We begin with the raw amino-acid sequence, 867 residues long: Coiled-coil domain-containing protein 80 (867 aa).

Residues Met1–Ala18 form the signal peptide. Disordered regions lie at residues Arg83–Gly121 and Asp282–Ala539. Residues Gly95–Asp104 show a composition bias toward polar residues. Positions Pro288–Lys297 are enriched in basic and acidic residues. The span at Arg301–Pro370 shows a compositional bias: low complexity. Residues Ala401–Glu412 are compositionally biased toward basic and acidic residues. Residues Lys426–Lys435 are compositionally biased toward basic residues. The segment covering Lys436–Asp451 has biased composition (basic and acidic residues). The span at Lys471–Lys483 shows a compositional bias: basic residues. Composition is skewed to basic and acidic residues over residues Asp484–Gly504 and Lys514–Lys523.

Belongs to the CCDC80 family. In terms of assembly, binds to various extracellular matrix proteins.

Its subcellular location is the secreted. The protein localises to the extracellular space. It localises to the extracellular matrix. Promotes cell adhesion and matrix assembly. The protein is Coiled-coil domain-containing protein 80 (ccdc80) of Danio rerio (Zebrafish).